Consider the following 294-residue polypeptide: Zinc finger protein CONSTANS-LIKE 3 (294 aa).

Cys-8, Cys-11, Cys-31, His-36, Cys-51, Cys-54, Cys-74, and His-79 together coordinate Zn(2+). The B box-type 1; atypical zinc-finger motif lies at 8 to 50 (CDSCKSTAATLFCRADAAFLCGDCDGKIHTANKLASRHERVWL). The B box-type 2; atypical zinc finger occupies 51–93 (CEVCEQAPAHVTCKADAAALCVTCDRDIHSANPLSRRHERVPI). In terms of domain architecture, CCT spans 229 to 271 (REARVLRYREKRKNRKFEKTIRYASRKAYAEMRPRIKGRFAKR).

The protein belongs to the CONSTANS family.

Its subcellular location is the nucleus. The polypeptide is Zinc finger protein CONSTANS-LIKE 3 (COL3) (Arabidopsis thaliana (Mouse-ear cress)).